Reading from the N-terminus, the 166-residue chain is Protein C2-DOMAIN ABA-RELATED 11 (166 aa).

Position 1 is an N-acetylmethionine (M1). A C2 domain is found at 1 to 103 (MGEPLGLLQV…ISVARLRHVV (103 aa)). Position 2 is an N-acetylglycine; in Protein C2-DOMAIN ABA-RELATED 11, N-terminally processed (G2). Ca(2+)-binding residues include R21, D22, D27, D73, K74, D75, and D81.

The protein belongs to the plant CAR protein family. In terms of assembly, binds to PYR/PYL/RCAR abscisic acid intracellular receptors in an ABA-independent manner, both at the plasma membrane and in the nucleus.

It localises to the cell membrane. The protein resides in the nucleus. Its function is as follows. Stimulates the GTPase/ATPase activities of Obg-like ATPases. Mediates the transient calcium-dependent interaction of PYR/PYL/RCAR abscisic acid (ABA) receptors with the plasma membrane and thus regulates ABA sensitivity. The chain is Protein C2-DOMAIN ABA-RELATED 11 from Arabidopsis thaliana (Mouse-ear cress).